The chain runs to 158 residues: Glycine/sarcosine/betaine reductase complex component A1 (158 aa).

The active site involves Sec-44. Residue Sec-44 is a non-standard amino acid, selenocysteine.

Belongs to the GrdA family. As to quaternary structure, monomer. Component of the glycine, sarcosine and betaine reductase complexes, together with components B and C.

The catalysed reaction is acetyl phosphate + [thioredoxin]-disulfide + NH4(+) + H2O = [thioredoxin]-dithiol + glycine + phosphate + H(+). It carries out the reaction acetyl phosphate + methylamine + [thioredoxin]-disulfide + H2O = sarcosine + [thioredoxin]-dithiol + phosphate + H(+). It catalyses the reaction acetyl phosphate + trimethylamine + [thioredoxin]-disulfide + H2O = glycine betaine + [thioredoxin]-dithiol + phosphate + H(+). Functionally, in the first step of glycine, betaine and sarcosine reductases, the substrate is bound to component PB via a Schiff base intermediate. Then the PB-activated substrate is nucleophilically attacked by the selenol anion of component PA to transform it to a carboxymethylated selenoether and the respective amine. By action of component PC, acetyl phosphate is formed, leaving component PA in its oxidized state. Finally component PA becomes reduced by the thioredoxin system to start a new catalytic cycle of reductive deamination. The polypeptide is Glycine/sarcosine/betaine reductase complex component A1 (grdA1) (Peptoclostridium acidaminophilum (Eubacterium acidaminophilum)).